The primary structure comprises 305 residues: Porphobilinogen deaminase (305 aa).

The residue at position 240 (Cys-240) is an S-(dipyrrolylmethanemethyl)cysteine.

The protein belongs to the HMBS family. Monomer. Dipyrromethane serves as cofactor.

The enzyme catalyses 4 porphobilinogen + H2O = hydroxymethylbilane + 4 NH4(+). It participates in porphyrin-containing compound metabolism; protoporphyrin-IX biosynthesis; coproporphyrinogen-III from 5-aminolevulinate: step 2/4. Tetrapolymerization of the monopyrrole PBG into the hydroxymethylbilane pre-uroporphyrinogen in several discrete steps. The chain is Porphobilinogen deaminase from Xylella fastidiosa (strain M23).